Reading from the N-terminus, the 224-residue chain is Response regulator protein GraR (224 aa).

In terms of domain architecture, Response regulatory spans Gln2–Tyr115. At Asp51 the chain carries 4-aspartylphosphate. Positions Lys126–Glu224 form a DNA-binding region, ompR/PhoB-type. 3 positions are modified to phosphothreonine: Thr128, Thr130, and Thr149.

In terms of assembly, interacts with GraX. Post-translationally, phosphorylated by GraS. Phosphorylated by Stk1; phosphorylation increases the DNA-binding activity of GraR.

The protein resides in the cytoplasm. Its function is as follows. Member of the two-component regulatory system GraR/GraS involved in resistance against cationic antimicrobial peptides (CAMPs). Upon phosphorylation by GraS, functions as a transcription regulator by direct binding to promoter regions of target genes such as adhesins, exoproteins, transporters, toxins, and proteins involved in cell wall synthesis. Down-regulates the expression of many genes involved in RNA and amino acid synthesis or glycolysis. The sequence is that of Response regulator protein GraR (graR) from Staphylococcus aureus (strain MRSA252).